The sequence spans 320 residues: Aminoacyl tRNA synthase complex-interacting multifunctional protein 2 (320 aa).

The residue at position 36 (S36) is a Phosphoserine. An interaction with PRKN region spans residues 82–162 (TPDADLDVTN…HTHSSVKNVP (81 aa)). Residues 162-225 (PENLVKCFGE…FLFSLFGQKH (64 aa)) form an interaction with TP53 region. Residues 220-317 (LFGQKHNAVT…NLAPFSTALQ (98 aa)) enclose the GST C-terminal domain.

In terms of assembly, part of the multisynthetase complex (MSC), a multisubunit complex that groups tRNA ligases for Arg (RARS1), Asp (DARS1), Gln (QARS1), Ile (IARS1), Leu (LARS1), Lys (KARS1), Met (MARS1) the bifunctional ligase for Glu and Pro (EPRS1) and the auxiliary subunits AIMP1/p43, AIMP2/p38 and EEF1E1/p18. Interacts (via N-terminus) with KARS1. Interacts with EPRS1. Forms a linear complex that contains MARS1, EEF1E1, EPRS1 and AIMP2 that is at the core of the multisubunit complex. Binds FUBP1 (via C-terminus). Interacts in both its unphosphorylated and phosphorylated forms with p53/TP53 (via N-terminus) in the nucleus following UV irradiation. Interacts (via N-terminus) with PRKN/parkin (via first RING-type domain). Interacts with TARS3. In terms of processing, phosphorylated on serine residues in response to UV irradiation. Post-translationally, ubiquitinated by PRKN, leading to its degradation by the proteasome.

The protein localises to the cytoplasm. Its subcellular location is the cytosol. It is found in the nucleus. Functionally, required for assembly and stability of the aminoacyl-tRNA synthase complex. Mediates ubiquitination and degradation of FUBP1, a transcriptional activator of MYC, leading to MYC down-regulation which is required for aveolar type II cell differentiation. Blocks MDM2-mediated ubiquitination and degradation of p53/TP53. Functions as a proapoptotic factor. This chain is Aminoacyl tRNA synthase complex-interacting multifunctional protein 2 (Aimp2), found in Mus musculus (Mouse).